The following is a 65-amino-acid chain: Conotoxin VnMLCL-041 (65 aa).

Positions 1–19 (MLCLPVFIILLLLASPAAP) are cleaved as a signal peptide. The propeptide occupies 20–43 (NPLQTRIQSNLIRAGPEDANIKTD). Lysine 64 bears the Lysine amide mark.

The protein belongs to the conotoxin T superfamily. Expressed by the venom duct.

Its subcellular location is the secreted. The polypeptide is Conotoxin VnMLCL-041 (Conus ventricosus (Mediterranean cone)).